The sequence spans 274 residues: MGTLSVNQNKLQKRLRRLAGEAITDFNMIEDGDKVMVCLSGGKDSYTMLDILLYLQKVAPIRFEIVAVNMDQKQPGFPEHVLPEYLKSIGVEYHIVEKDTYSVVKEKIPEGKTTCSLCSRLRRGTLYTFADEIGATKMALGHHRDDILETFFLNMFYGGTLKAMPPKLLADDGRNVVIRPLAYCSEKDIEAYSQLKEFPIIPCNLCGSQENLQRQVVKEMLLEWERKSPGRTEIMFRALQNVVPSQLADRNLFDFANLRIDENATPRFLDVMNL.

The short motif at 40 to 45 (SGGKDS) is the PP-loop motif element. 3 residues coordinate [4Fe-4S] cluster: C115, C118, and C206.

The protein belongs to the TtcA family. In terms of assembly, homodimer. Requires Mg(2+) as cofactor. [4Fe-4S] cluster is required as a cofactor.

It localises to the cytoplasm. It catalyses the reaction cytidine(32) in tRNA + S-sulfanyl-L-cysteinyl-[cysteine desulfurase] + AH2 + ATP = 2-thiocytidine(32) in tRNA + L-cysteinyl-[cysteine desulfurase] + A + AMP + diphosphate + H(+). It participates in tRNA modification. Its function is as follows. Catalyzes the ATP-dependent 2-thiolation of cytidine in position 32 of tRNA, to form 2-thiocytidine (s(2)C32). The sulfur atoms are provided by the cysteine/cysteine desulfurase (IscS) system. The protein is tRNA-cytidine(32) 2-sulfurtransferase of Pseudomonas aeruginosa (strain LESB58).